The sequence spans 311 residues: Methionyl-tRNA formyltransferase (311 aa).

Position 117–120 (117–120 (SLLP)) interacts with (6S)-5,6,7,8-tetrahydrofolate.

It belongs to the Fmt family.

The enzyme catalyses L-methionyl-tRNA(fMet) + (6R)-10-formyltetrahydrofolate = N-formyl-L-methionyl-tRNA(fMet) + (6S)-5,6,7,8-tetrahydrofolate + H(+). In terms of biological role, attaches a formyl group to the free amino group of methionyl-tRNA(fMet). The formyl group appears to play a dual role in the initiator identity of N-formylmethionyl-tRNA by promoting its recognition by IF2 and preventing the misappropriation of this tRNA by the elongation apparatus. The polypeptide is Methionyl-tRNA formyltransferase (Bordetella avium (strain 197N)).